Here is a 489-residue protein sequence, read N- to C-terminus: Rhamnulokinase (489 aa).

Ala13 to Arg17 lines the ATP pocket. Cys68 and Cys222 form a disulfide bridge. Substrate is bound by residues Gly83 and His236–Thr238. The active-site Proton acceptor is the Asp237. Thr259 lines the ATP pocket. Substrate is bound at residue Asn296. Gln304 serves as a coordination point for ATP. Cysteines 353 and 370 form a disulfide. Gly402 serves as a coordination point for ATP. Cysteines 413 and 417 form a disulfide.

The protein belongs to the rhamnulokinase family. Requires Mg(2+) as cofactor.

It carries out the reaction L-rhamnulose + ATP = L-rhamnulose 1-phosphate + ADP + H(+). It participates in carbohydrate degradation; L-rhamnose degradation; glycerone phosphate from L-rhamnose: step 2/3. Its function is as follows. Involved in the catabolism of L-rhamnose (6-deoxy-L-mannose). Catalyzes the transfer of the gamma-phosphate group from ATP to the 1-hydroxyl group of L-rhamnulose to yield L-rhamnulose 1-phosphate. This is Rhamnulokinase from Salmonella dublin (strain CT_02021853).